Consider the following 328-residue polypeptide: Biotin synthase (328 aa).

The 228-residue stretch at 48–275 folds into the Radical SAM core domain; it reads NRIQLSKLLN…KSHVRLTAGR (228 aa). Residues Cys-63, Cys-67, and Cys-70 each contribute to the [4Fe-4S] cluster site. Cys-107, Cys-138, Cys-198, and Arg-270 together coordinate [2Fe-2S] cluster.

The protein belongs to the radical SAM superfamily. Biotin synthase family. As to quaternary structure, homodimer. Requires [4Fe-4S] cluster as cofactor. [2Fe-2S] cluster serves as cofactor.

It catalyses the reaction (4R,5S)-dethiobiotin + (sulfur carrier)-SH + 2 reduced [2Fe-2S]-[ferredoxin] + 2 S-adenosyl-L-methionine = (sulfur carrier)-H + biotin + 2 5'-deoxyadenosine + 2 L-methionine + 2 oxidized [2Fe-2S]-[ferredoxin]. Its pathway is cofactor biosynthesis; biotin biosynthesis; biotin from 7,8-diaminononanoate: step 2/2. Catalyzes the conversion of dethiobiotin (DTB) to biotin by the insertion of a sulfur atom into dethiobiotin via a radical-based mechanism. This is Biotin synthase from Brucella abortus (strain S19).